A 253-amino-acid chain; its full sequence is Imidazole glycerol phosphate synthase subunit HisF (253 aa).

Residues D11 and D130 contribute to the active site.

Belongs to the HisA/HisF family. In terms of assembly, heterodimer of HisH and HisF.

It localises to the cytoplasm. The catalysed reaction is 5-[(5-phospho-1-deoxy-D-ribulos-1-ylimino)methylamino]-1-(5-phospho-beta-D-ribosyl)imidazole-4-carboxamide + L-glutamine = D-erythro-1-(imidazol-4-yl)glycerol 3-phosphate + 5-amino-1-(5-phospho-beta-D-ribosyl)imidazole-4-carboxamide + L-glutamate + H(+). It participates in amino-acid biosynthesis; L-histidine biosynthesis; L-histidine from 5-phospho-alpha-D-ribose 1-diphosphate: step 5/9. In terms of biological role, IGPS catalyzes the conversion of PRFAR and glutamine to IGP, AICAR and glutamate. The HisF subunit catalyzes the cyclization activity that produces IGP and AICAR from PRFAR using the ammonia provided by the HisH subunit. The protein is Imidazole glycerol phosphate synthase subunit HisF of Methylibium petroleiphilum (strain ATCC BAA-1232 / LMG 22953 / PM1).